The chain runs to 503 residues: UDP-N-acetylglucosamine--peptide N-acetylglucosaminyltransferase GtfA subunit (503 aa).

The segment at 1–78 (MTIYNINLGI…FTDIKIAPTS (78 aa)) is N-terminus R-fold-1. 16-19 (GVEY) is a UDP binding site. The segment at 79–195 (VTVDDVLAYF…VYHFKDKIFY (117 aa)) is extended beta-sheet domain. Positions 196 to 306 (GKQAFVRAFM…QPKIVTIPVG (111 aa)) are C-terminus R-fold-1. His-242 provides a ligand contact to N-acetyl-D-glucosamine. The segment at 307-503 (SIDSLTDSSQ…KKTVEEVLHD (197 aa)) is R-fold-2. Residue Arg-328 coordinates UDP. Residue Glu-332 participates in N-acetyl-D-glucosamine binding. Residues Lys-333, Gly-358, and 384–385 (HA) each bind UDP. Residue 404 to 407 (EGFG) coordinates N-acetyl-D-glucosamine. 408–412 (LTLME) is a binding site for UDP.

The protein belongs to the glycosyltransferase group 1 family. Glycosyltransferase 4 subfamily. In terms of assembly, monomer. Interacts with stabilizing protein GtfB, probably as a heterotetramer with 2 subunits each of GtfA and GtfB, part of the accessory SecA2/SecY2 protein translocation apparatus.

It localises to the cytoplasm. It is found in the cell membrane. It catalyses the reaction L-seryl-[protein] + UDP-N-acetyl-alpha-D-glucosamine = 3-O-[N-acetyl-alpha-D-glucosaminyl]-L-seryl-[protein] + UDP + H(+). Its pathway is protein modification; protein glycosylation. Required for the polymorphic O-glycosylation of serine-rich repeat protein PsrP. Catalyzes the first step in glycosylation by transferring N-acetylglucosamine from UDP-GlcNAc to serine residues in PsrP. Part of the accessory SecA2/SecY2 system specifically required to export serine-rich repeat cell wall proteins encoded upstream in the same operon. The GtfA-GtfB complex adds GlcNAc from UDP-GlcNAc to PsrP (experimentally characterized with truncated PsrP-SSR1 constructs); this subunit alone has weak N-acetylglucosaminyl transferase activity that is 10-fold stimulated by GtfB. The complex requires at least a 25 residue-long peptide for activity; the in vitro assay has only been seen to glycosylate Ser residues. The alpha linkage was shown in L.reuteri. This Streptococcus pneumoniae serotype 4 (strain ATCC BAA-334 / TIGR4) protein is UDP-N-acetylglucosamine--peptide N-acetylglucosaminyltransferase GtfA subunit.